Reading from the N-terminus, the 543-residue chain is Ribonuclease Y (543 aa).

A helical membrane pass occupies residues 4 to 24; it reads IIMIPVATAIVSLLVGTVTGY. Residues 233–296 form the KH domain; it reads TVSVVDLPNE…EIAKRAMERL (64 aa). The 94-residue stretch at 359-452 folds into the HD domain; the sequence is VLSHSIEVGK…VVAADTISSA (94 aa).

This sequence belongs to the RNase Y family.

The protein localises to the cell membrane. Endoribonuclease that initiates mRNA decay. This chain is Ribonuclease Y, found in Lactobacillus acidophilus (strain ATCC 700396 / NCK56 / N2 / NCFM).